The primary structure comprises 204 residues: FMN-dependent NADH:quinone oxidoreductase 5 (204 aa).

Serine 10 is a binding site for FMN.

This sequence belongs to the azoreductase type 1 family. As to quaternary structure, homodimer. FMN is required as a cofactor.

It carries out the reaction 2 a quinone + NADH + H(+) = 2 a 1,4-benzosemiquinone + NAD(+). It catalyses the reaction N,N-dimethyl-1,4-phenylenediamine + anthranilate + 2 NAD(+) = 2-(4-dimethylaminophenyl)diazenylbenzoate + 2 NADH + 2 H(+). Quinone reductase that provides resistance to thiol-specific stress caused by electrophilic quinones. In terms of biological role, also exhibits azoreductase activity. Catalyzes the reductive cleavage of the azo bond in aromatic azo compounds to the corresponding amines. The polypeptide is FMN-dependent NADH:quinone oxidoreductase 5 (Burkholderia lata (strain ATCC 17760 / DSM 23089 / LMG 22485 / NCIMB 9086 / R18194 / 383)).